A 102-amino-acid chain; its full sequence is Large ribosomal subunit protein bL21 (102 aa).

The protein belongs to the bacterial ribosomal protein bL21 family. Part of the 50S ribosomal subunit. Contacts protein L20.

Functionally, this protein binds to 23S rRNA in the presence of protein L20. The sequence is that of Large ribosomal subunit protein bL21 from Cytophaga hutchinsonii (strain ATCC 33406 / DSM 1761 / CIP 103989 / NBRC 15051 / NCIMB 9469 / D465).